We begin with the raw amino-acid sequence, 69 residues long: U-scoloptoxin(21)-Sm2a (69 aa).

The signal sequence occupies residues 1–21 (MFFLGFIIVCASEEQSDNRLP). The segment at 46–69 (ANDPNGPGRRRRSPIVREEILRHP) is disordered. The segment covering 60-69 (IVREEILRHP) has biased composition (basic and acidic residues).

The protein belongs to the scoloptoxin-21 family. Expressed by the venom gland.

It localises to the secreted. This chain is U-scoloptoxin(21)-Sm2a, found in Scolopendra morsitans (Tanzanian blue ringleg centipede).